Reading from the N-terminus, the 668-residue chain is Acetoin catabolism regulatory protein (668 aa).

The region spanning 341-570 (LTGGDAALQL…NVLEYARAVC (230 aa)) is the Sigma-54 factor interaction domain. ATP contacts are provided by residues 369-376 (GETGSGKE) and 433-442 (ADGGTLFLDE). Residues 586-606 (GPAPSAALPQPGPAQSPAAAP) show a composition bias toward low complexity. The interval 586–611 (GPAPSAALPQPGPAQSPAAAPFDPHQ) is disordered. Positions 630–649 (LSAVARQIGVSRMTLYRRME) form a DNA-binding region, H-T-H motif.

Required for sigma-54-dependent transcription of acoXABC. This Cupriavidus necator (strain ATCC 17699 / DSM 428 / KCTC 22496 / NCIMB 10442 / H16 / Stanier 337) (Ralstonia eutropha) protein is Acetoin catabolism regulatory protein (acoR).